Reading from the N-terminus, the 654-residue chain is MFLPRLVRYRTERFIKMVPTRTLRRINHSSRDPIQKQVLALIKANANLNDNDKLKIRKYWSDMADYKSLRKQENSLLESSILHEVKIEDFISFINRTKTSSMTTRGIYRRECLYQCKKNLDLVNQVVSQVSSVRHQKPLTTQLDTMRWCVDDAIGTGDIVMAADLFLLYYRLFTDDKKLDEQYAKKIISVLAYPNPLHDHVHLVKYLQLNSLFESITGGGIKLTRFQLETLSNKALGLSNEAPQLCKAILNKLMNINYSLTNDLKLRDDQVLLAYKSIDENYRRGNVASVYSIWNKIKEHYVSISAHDSRIIYKVFKICTHNRAYRSICSEMFWQLTPEYYCNNPLILPAIIDFITKQDSLTMAKELMQNINRYTLPENHHIVWLNKRCLSSLLRMHLKFNDSNGVDRVLKQITTNFRALSQENYQAIIIHLFKTQNLDHIAKAVKLLDTIPPGQAMLAYGSIINEVVDWKLASKVKFTDNLMALVNDLLTKAHDFDPDHRNSLWNVVSALYIKKLCHYKKRDGKFVANAKKDIDLAKLLYINAAKRSKTYWTKSNCNPFIASSPCDVKLKVNNQNRFTILRNIALSALQIGRTDIFLWACAELYQNGMTIEELKLDWNFILKHQIRNSEFKTNKEIIQDIKKHGVSAVKRYLR.

Its subcellular location is the mitochondrion. Responsible for conferring a stable 5'-end on cytochrome b mRNA. The protein is Cytochrome B pre-mRNA-processing protein 1 (CBP1) of Saccharomyces cerevisiae (strain ATCC 204508 / S288c) (Baker's yeast).